Consider the following 144-residue polypeptide: Maximins 5/H4 type 3 (144 aa).

Residues 1–18 (MNFKYIVAVSFLIASAYA) form the signal peptide. 2 propeptides span residues 19-43 (RSVQ…REIR) and 74-123 (TAED…KEKR). Position 143 is a leucine amide (leucine 143).

Belongs to the bombinin family. In terms of tissue distribution, expressed by the skin glands.

The protein localises to the secreted. Its function is as follows. Maximin-5 shows antibacterial activity against both Gram-positive and Gram-negative bacteria. The only exception is the resistance of E.coli. Also shows antimicrobial activity against fungi C.albicans, A.flavus and P.uticale. It has little hemolytic activity. It does not possess a significant cytotoxicity against tumor cell lines. It does not possess a significant anti-HIV activity. Functionally, maximin-H4 shows antibacterial activity against both Gram-positive and Gram-negative bacteria. It also shows antimicrobial activity against the fungus C.albicans. Shows strong hemolytic activity. This is Maximins 5/H4 type 3 from Bombina maxima (Giant fire-bellied toad).